Reading from the N-terminus, the 403-residue chain is S-adenosylmethionine synthase (403 aa).

His17 serves as a coordination point for ATP. Asp19 is a binding site for Mg(2+). Glu45 is a binding site for K(+). Residues Glu58 and Gln104 each contribute to the L-methionine site. Residues 104 to 114 (QSPDIAQGVDT) are flexible loop. ATP contacts are provided by residues 179–181 (DGK), 250–251 (KF), Asp259, 265–266 (RK), Ala282, and Lys286. Asp259 lines the L-methionine pocket. Residue Lys290 coordinates L-methionine.

This sequence belongs to the AdoMet synthase family. Homotetramer; dimer of dimers. Requires Mg(2+) as cofactor. The cofactor is K(+).

The protein localises to the cytoplasm. The enzyme catalyses L-methionine + ATP + H2O = S-adenosyl-L-methionine + phosphate + diphosphate. It functions in the pathway amino-acid biosynthesis; S-adenosyl-L-methionine biosynthesis; S-adenosyl-L-methionine from L-methionine: step 1/1. Functionally, catalyzes the formation of S-adenosylmethionine (AdoMet) from methionine and ATP. The overall synthetic reaction is composed of two sequential steps, AdoMet formation and the subsequent tripolyphosphate hydrolysis which occurs prior to release of AdoMet from the enzyme. The chain is S-adenosylmethionine synthase from Mycobacterium avium (strain 104).